The sequence spans 455 residues: Argininosuccinate lyase (455 aa).

The protein belongs to the lyase 1 family. Argininosuccinate lyase subfamily.

It localises to the cytoplasm. The catalysed reaction is 2-(N(omega)-L-arginino)succinate = fumarate + L-arginine. The protein operates within amino-acid biosynthesis; L-arginine biosynthesis; L-arginine from L-ornithine and carbamoyl phosphate: step 3/3. The chain is Argininosuccinate lyase from Shewanella baltica (strain OS195).